The sequence spans 302 residues: Pyridoxal 5'-phosphate synthase subunit PdxS (302 aa).

Asp32 contributes to the D-ribose 5-phosphate binding site. Lys89 (schiff-base intermediate with D-ribose 5-phosphate) is an active-site residue. Gly161 lines the D-ribose 5-phosphate pocket. Arg173 lines the D-glyceraldehyde 3-phosphate pocket. D-ribose 5-phosphate is bound by residues Gly222 and 243-244 (GS). The disordered stretch occupies residues 275 to 302 (IAKNPGKGMKGQANADLDEEEQLQGRGV).

The protein belongs to the PdxS/SNZ family. In terms of assembly, in the presence of PdxT, forms a dodecamer of heterodimers.

It carries out the reaction aldehydo-D-ribose 5-phosphate + D-glyceraldehyde 3-phosphate + L-glutamine = pyridoxal 5'-phosphate + L-glutamate + phosphate + 3 H2O + H(+). It participates in cofactor biosynthesis; pyridoxal 5'-phosphate biosynthesis. Functionally, catalyzes the formation of pyridoxal 5'-phosphate from ribose 5-phosphate (RBP), glyceraldehyde 3-phosphate (G3P) and ammonia. The ammonia is provided by the PdxT subunit. Can also use ribulose 5-phosphate and dihydroxyacetone phosphate as substrates, resulting from enzyme-catalyzed isomerization of RBP and G3P, respectively. The sequence is that of Pyridoxal 5'-phosphate synthase subunit PdxS from Haloarcula marismortui (strain ATCC 43049 / DSM 3752 / JCM 8966 / VKM B-1809) (Halobacterium marismortui).